A 217-amino-acid chain; its full sequence is Neuron-specific vesicular protein calcyon (217 aa).

Positions 1-25 (MVKLGCSFSGKPGKDPGDQDGAAMD) are disordered. Residues 1 to 87 (MVKLGCSFSG…EEGRRLPTAR (87 aa)) lie on the Extracellular side of the membrane. Asn-73 carries N-linked (GlcNAc...) asparagine glycosylation. Residues 88–108 (MIAFAMALLGCVLIMYKAIWY) traverse the membrane as a helical segment. At 109 to 217 (DQFTCPDGFL…AGSAAPPPAQ (109 aa)) the chain is on the cytoplasmic side. A disordered region spans residues 162-217 (PAAWGDGYRAAKEERKGPTQAGAAAAATEPPGKPSAKAEKEAARKAAGSAAPPPAQ).

Belongs to the NSG family. As to quaternary structure, interacts with CLTA. Glycosylated. As to expression, expressed in the pyramidal cells of the prefrontal cortex, in hypothalamus and in caudate nucleus. No expression in spleen. Up-regulated in the prefrontal cortex of schizophrenic patients with nearly twice the levels of non-schizophrenics.

The protein resides in the cytoplasmic vesicle membrane. Its subcellular location is the cell membrane. Interacts with clathrin light chain A and stimulates clathrin self-assembly and clathrin-mediated endocytosis. The chain is Neuron-specific vesicular protein calcyon (CALY) from Homo sapiens (Human).